The following is a 167-amino-acid chain: MLVLLAFIIAFHITSAALLFIATIDNAWWVGDEFFADVWRICTNNTNCTVINDSFQEYSTLQAVQATMILSTILCCIAFFIFVLQLFRLKQGERFVLTSIIQLMSCLCVMIAASIYTDRREDIHHKNAKFYPVTREGSYGYSYILAWVAFACTFISGMMYLILRKRK.

A helical transmembrane segment spans residues 1–21 (MLVLLAFIIAFHITSAALLFI). N-linked (GlcNAc...) asparagine glycosylation is found at asparagine 44, asparagine 47, and asparagine 52. A run of 3 helical transmembrane segments spans residues 67-87 (TMIL…LQLF), 95-115 (FVLT…AASI), and 143-163 (YILA…YLIL).

This sequence belongs to the PMP-22/EMP/MP20 family. Interacts with PTK2; regulates PTK2 activation and localization. Interacts with ITGB3; regulates the levels of the heterodimer ITGA5-ITGB3 integrin surface expression. Interacts with P2RX7 (via C-terminus). Interacts with ITGB1; the interaction may be direct or indirect and ITGB1 has a heterodimer form.

Its subcellular location is the golgi apparatus membrane. It is found in the cell membrane. The protein resides in the apical cell membrane. The protein localises to the membrane raft. It localises to the cytoplasm. Its subcellular location is the nucleus. It is found in the perinuclear region. In terms of biological role, functions as a key regulator of cell membrane composition by regulating protein surface expression. Also, plays a role in regulation of processes including cell migration, cell proliferation, cell contraction and cell adhesion. Regulates transepithelial migration of neutrophils into the alveolar lumen, potentially via mediation of cell surface expression of adhesion markers and lipid raft formation. Negatively regulates caveolae formation by reducing CAV1 expression and CAV1 amount by increasing lysosomal degradation. Facilitates surface trafficking and the formation of lipid rafts bearing GPI-anchor proteins. Regulates surface expression of MHC1 and ICAM1 proteins increasing susceptibility to T-cell mediated cytotoxicity. Regulates the plasma membrane expression of the integrin heterodimers ITGA6-ITGB1, ITGA5-ITGB3 and ITGA5-ITGB1 resulting in modulation of cell-matrix adhesion. Also regulates many processes through PTK2. Regulates blood vessel endothelial cell migration and angiogenesis by regulating VEGF protein expression through PTK2 activation. Regulates cell migration and cell contraction through PTK2 and SRC activation. Regulates focal adhesion density, F-actin conformation and cell adhesion capacity through interaction with PTK2. Positively regulates cell proliferation. Plays a role during cell death and cell blebbing. Promotes angiogenesis and vasculogenesis through induction of VEGFA via a HIF1A-dependent pathway. Also plays a role in embryo implantation by regulating surface trafficking of integrin heterodimer ITGA5-ITGB3. Plays a role in placental angiogenesis and uterine natural killer cell regulation at the maternal-fetal placental interface, however not required in the maternal tissues for a viable pregnancy. Involved in the early stages of embryogenic development and cardiogenesis, potentially via regulation of epithelial-mesenchymal transition timing. May play a role in glomerular filtration. The protein is Epithelial membrane protein 2 (EMP2) of Pan troglodytes (Chimpanzee).